The primary structure comprises 346 residues: MNKYTASVVGGSGFTGGELLRLLTQHPYFEVVQATSRSKTHKTIGNVHPNLRSVDLRFTDPSELESVDILFAATPHGVSMQQIESFTAAADTVVDLSADFRLNSAEQYDEWYDGHACPEYLEDAEYALPEINRSNLVGASLIASGGCNATATILGLKPLFDADILTGDEQVVVDVKVGSSEGGAGGGDASSHPERSGVVRPYAPTGHRHEAEIEQFLGLSVSFTAHAVEMTRGASATCHVFPSEPVSNSDLWGAYHDVYAEEPFMRTVAGGGGVYRYPEPKSVAGSNYAEVGFERDPENHRLVIFSAIDNMMKGSAGQAVHAANIALGIDETTGLEFTGLHPVGAP.

Residue Ser12 to Thr15 coordinates NADP(+). Residue Cys147 is part of the active site. The disordered stretch occupies residues Gly178 to Val198. Residue Asn310 participates in NADP(+) binding.

Belongs to the NAGSA dehydrogenase family. Type 1 subfamily. LysY sub-subfamily.

The protein resides in the cytoplasm. The enzyme catalyses [amino-group carrier protein]-C-terminal-N-(1-carboxy-5-oxopentan-1-yl)-L-glutamine + phosphate + NADP(+) = [amino-group carrier protein]-C-terminal-N-(1-carboxy-5-phosphooxy-5-oxopentan-1-yl)-L-glutamine + NADPH + H(+). It carries out the reaction [amino-group carrier protein]-C-terminal-gamma-(L-glutamyl-5-semialdehyde)-L-glutamate + phosphate + NADP(+) = [amino-group carrier protein]-C-terminal-gamma-(5-phospho-L-glutamyl)-L-glutamate + NADPH + H(+). It functions in the pathway amino-acid biosynthesis; L-lysine biosynthesis via AAA pathway; L-lysine from L-alpha-aminoadipate (Thermus route): step 3/5. Its pathway is amino-acid biosynthesis; L-arginine biosynthesis. Involved in both the arginine and lysine biosynthetic pathways. In Haloquadratum walsbyi (strain DSM 16790 / HBSQ001), this protein is Putative [LysW]-L-2-aminoadipate/[LysW]-L-glutamate phosphate reductase.